We begin with the raw amino-acid sequence, 367 residues long: Molybdopterin synthase catalytic subunit (367 aa).

Residues 101–102 (HR), Lys117, and 124–126 (KKE) each bind substrate. Residues 326 to 345 (HFTKREPSSMEAAPPKKIRK) form a disordered region.

This sequence belongs to the MoaE family. MOCS2B subfamily. As to quaternary structure, heterotetramer; composed of 2 small (Mocs2A) and 2 large (Mocs2B) subunits.

The protein localises to the cytoplasm. It carries out the reaction 2 [molybdopterin-synthase sulfur-carrier protein]-C-terminal-Gly-aminoethanethioate + cyclic pyranopterin phosphate + H2O = molybdopterin + 2 [molybdopterin-synthase sulfur-carrier protein]-C-terminal Gly-Gly + 2 H(+). It participates in cofactor biosynthesis; molybdopterin biosynthesis. Its function is as follows. Catalytic subunit of the molybdopterin synthase complex, a complex that catalyzes the conversion of precursor Z into molybdopterin. Acts by mediating the incorporation of 2 sulfur atoms from thiocarboxylated Mocs2A into precursor Z to generate a dithiolene group. The polypeptide is Molybdopterin synthase catalytic subunit (Drosophila sechellia (Fruit fly)).